We begin with the raw amino-acid sequence, 129 residues long: Fluoride-specific ion channel FluC (129 aa).

Transmembrane regions (helical) follow at residues 4 to 24 (LFVA…SGLI), 32 to 52 (FPWG…AFAT), 69 to 89 (FFMV…LQTL), and 105 to 125 (VLSV…AVLI). Residues G76 and T79 each contribute to the Na(+) site.

It belongs to the fluoride channel Fluc/FEX (TC 1.A.43) family.

It localises to the cell inner membrane. It carries out the reaction fluoride(in) = fluoride(out). Its activity is regulated as follows. Na(+) is not transported, but it plays an essential structural role and its presence is essential for fluoride channel function. Its function is as follows. Fluoride-specific ion channel. Important for reducing fluoride concentration in the cell, thus reducing its toxicity. This Rhodospirillum rubrum (strain ATCC 11170 / ATH 1.1.1 / DSM 467 / LMG 4362 / NCIMB 8255 / S1) protein is Fluoride-specific ion channel FluC.